Consider the following 621-residue polypeptide: Putative 5'-3' exonuclease R528 (621 aa).

It belongs to the 5'-3' exonuclease family.

It is found in the virion. This chain is Putative 5'-3' exonuclease R528, found in Acanthamoeba polyphaga mimivirus (APMV).